Here is a 466-residue protein sequence, read N- to C-terminus: Ribulose bisphosphate carboxylase large chain (466 aa).

At K5 the chain carries N6,N6,N6-trimethyllysine. Residues N114 and T164 each contribute to the substrate site. K166 (proton acceptor) is an active-site residue. Residue K168 coordinates substrate. Mg(2+) contacts are provided by K192, D194, and E195. K192 is modified (N6-carboxylysine). H285 acts as the Proton acceptor in catalysis. Substrate contacts are provided by R286, H318, and S370.

This sequence belongs to the RuBisCO large chain family. Type I subfamily. Heterohexadecamer of 8 large chains and 8 small chains; disulfide-linked. The disulfide link is formed within the large subunit homodimers. The cofactor is Mg(2+). In terms of processing, the disulfide bond which can form in the large chain dimeric partners within the hexadecamer appears to be associated with oxidative stress and protein turnover.

The protein resides in the plastid. It is found in the chloroplast. It catalyses the reaction 2 (2R)-3-phosphoglycerate + 2 H(+) = D-ribulose 1,5-bisphosphate + CO2 + H2O. It carries out the reaction D-ribulose 1,5-bisphosphate + O2 = 2-phosphoglycolate + (2R)-3-phosphoglycerate + 2 H(+). Its function is as follows. RuBisCO catalyzes two reactions: the carboxylation of D-ribulose 1,5-bisphosphate, the primary event in carbon dioxide fixation, as well as the oxidative fragmentation of the pentose substrate in the photorespiration process. Both reactions occur simultaneously and in competition at the same active site. The protein is Ribulose bisphosphate carboxylase large chain of Silene gallica (Common catchfly).